The sequence spans 506 residues: Anaerobic nitric oxide reductase transcription regulator NorR (506 aa).

At Asp57 the chain carries 4-aspartylphosphate. The region spanning 187–416 is the Sigma-54 factor interaction domain; the sequence is MIGLSPAMTQ…LEHAIHRAVV (230 aa). ATP-binding positions include 215 to 222 and 278 to 287; these read GETGTGKE and ADNGTLFLDE. The segment at residues 481–500 is a DNA-binding region (H-T-H motif); sequence WAASARALETDVANLHRLAK.

The protein operates within nitrogen metabolism; nitric oxide reduction. In terms of biological role, required for the expression of anaerobic nitric oxide (NO) reductase, acts as a transcriptional activator for at least the norVW operon. Activation also requires sigma-54. This chain is Anaerobic nitric oxide reductase transcription regulator NorR, found in Salmonella dublin (strain CT_02021853).